Consider the following 387-residue polypeptide: Probable multidrug resistance protein EmrK (387 aa).

Topologically, residues 1–16 (MEQINSNKKHSNRRKY) are cytoplasmic. Residues 17-37 (FSLLAVVLFIAFSGAYAYWSM) traverse the membrane as a helical segment. Residues 38 to 387 (ELEDMISTDD…SNIISHNGQL (350 aa)) lie on the Periplasmic side of the membrane.

It belongs to the membrane fusion protein (MFP) (TC 8.A.1) family. In terms of assembly, part of the tripartite efflux system EmrYK-TolC, which is composed of an inner membrane transporter, EmrY, a membrane fusion protein, EmrK, and an outer membrane component, TolC. The complex forms a large protein conduit and can translocate molecules across both the inner and outer membranes.

Its subcellular location is the cell inner membrane. In terms of biological role, part of the tripartite efflux system EmrYK-TolC, which confers resistance to various drugs. This chain is Probable multidrug resistance protein EmrK (emrK), found in Escherichia coli (strain K12).